We begin with the raw amino-acid sequence, 408 residues long: Imidazolonepropionase (408 aa).

Fe(3+) is bound by residues histidine 66 and histidine 68. Positions 66 and 68 each coordinate Zn(2+). 4-imidazolone-5-propanoate-binding residues include arginine 75, tyrosine 138, and histidine 171. Residue tyrosine 138 participates in N-formimidoyl-L-glutamate binding. Histidine 236 lines the Fe(3+) pocket. Histidine 236 is a binding site for Zn(2+). Glutamine 239 serves as a coordination point for 4-imidazolone-5-propanoate. Fe(3+) is bound at residue aspartate 311. Residue aspartate 311 participates in Zn(2+) binding. The N-formimidoyl-L-glutamate site is built by asparagine 313 and glycine 315. Serine 316 lines the 4-imidazolone-5-propanoate pocket.

This sequence belongs to the metallo-dependent hydrolases superfamily. HutI family. The cofactor is Zn(2+). Fe(3+) serves as cofactor.

It localises to the cytoplasm. The enzyme catalyses 4-imidazolone-5-propanoate + H2O = N-formimidoyl-L-glutamate. The protein operates within amino-acid degradation; L-histidine degradation into L-glutamate; N-formimidoyl-L-glutamate from L-histidine: step 3/3. Catalyzes the hydrolytic cleavage of the carbon-nitrogen bond in imidazolone-5-propanoate to yield N-formimidoyl-L-glutamate. It is the third step in the universal histidine degradation pathway. The protein is Imidazolonepropionase of Idiomarina loihiensis (strain ATCC BAA-735 / DSM 15497 / L2-TR).